Here is a 117-residue protein sequence, read N- to C-terminus: uncharacterized protein (117 aa).

This sequence belongs to the mimivirus R69 family.

This is an uncharacterized protein from Acanthamoeba polyphaga mimivirus (APMV).